Here is a 371-residue protein sequence, read N- to C-terminus: Protein disulfide isomerase-like 2-2 (371 aa).

The N-terminal stretch at 1–27 is a signal peptide; that stretch reads MAIPRISPRKTLPLFAALALALAWAFA. 2 Thioredoxin domains span residues 28 to 143 and 147 to 262; these read APAF…TEGG and KLAT…EKCG. Catalysis depends on nucleophile residues C64, C67, C183, and C186. Disulfide bonds link C64/C67 and C183/C186.

The protein belongs to the protein disulfide isomerase family.

Its subcellular location is the secreted. The catalysed reaction is Catalyzes the rearrangement of -S-S- bonds in proteins.. In terms of biological role, acts as a protein-folding catalyst that interacts with nascent polypeptides to catalyze the formation, isomerization, and reduction or oxidation of disulfide bonds. May play a role in storage protein biogenesis. This is Protein disulfide isomerase-like 2-2 (PDIL2-2) from Oryza sativa subsp. japonica (Rice).